A 540-amino-acid chain; its full sequence is Zinc metalloproteinase nas-10 (540 aa).

Residues 293-500 enclose the Peptidase M12A domain; that stretch reads ASIFFEQNLI…VEILNKMYCK (208 aa). Cystine bridges form between cysteine 339–cysteine 499, cysteine 365–cysteine 385, cysteine 504–cysteine 540, cysteine 511–cysteine 533, and cysteine 520–cysteine 537. A Zn(2+)-binding site is contributed by histidine 394. Glutamate 395 is an active-site residue. Zn(2+)-binding residues include histidine 398 and histidine 404. Residues 504–540 form the ShKT domain; it reads CDDKNVYCGAWALQDLCNNPNHNVWMRSNCRKSCNFC.

It depends on Zn(2+) as a cofactor.

In terms of biological role, metalloprotease. This chain is Zinc metalloproteinase nas-10, found in Caenorhabditis elegans.